Reading from the N-terminus, the 493-residue chain is NADH-quinone oxidoreductase subunit N 2 (493 aa).

Helical transmembrane passes span I16 to I36, F45 to Q65, G87 to S107, G119 to T139, L141 to F161, L176 to I196, V219 to F239, L258 to L278, W285 to I305, L313 to N333, I340 to A360, A385 to L405, G421 to V441, and C464 to L484.

The protein belongs to the complex I subunit 2 family. As to quaternary structure, NDH-1 is composed of 14 different subunits. Subunits NuoA, H, J, K, L, M, N constitute the membrane sector of the complex.

It localises to the cell inner membrane. It carries out the reaction a quinone + NADH + 5 H(+)(in) = a quinol + NAD(+) + 4 H(+)(out). In terms of biological role, NDH-1 shuttles electrons from NADH, via FMN and iron-sulfur (Fe-S) centers, to quinones in the respiratory chain. The immediate electron acceptor for the enzyme in this species is believed to be ubiquinone. Couples the redox reaction to proton translocation (for every two electrons transferred, four hydrogen ions are translocated across the cytoplasmic membrane), and thus conserves the redox energy in a proton gradient. This is NADH-quinone oxidoreductase subunit N 2 from Solibacter usitatus (strain Ellin6076).